The primary structure comprises 522 residues: Cytochrome P450 26C1 (522 aa).

The chain crosses the membrane as a helical span at residues 9-29; the sequence is LSVLGAAGTALLCAGLLLSLA. Cys459 serves as a coordination point for heme.

It belongs to the cytochrome P450 family. It depends on heme as a cofactor. As to expression, detected in most tissues at very low level.

The protein resides in the membrane. The enzyme catalyses an organic molecule + reduced [NADPH--hemoprotein reductase] + O2 = an alcohol + oxidized [NADPH--hemoprotein reductase] + H2O + H(+). The catalysed reaction is all-trans-retinoate + reduced [NADPH--hemoprotein reductase] + O2 = all-trans-4-hydroxyretinoate + oxidized [NADPH--hemoprotein reductase] + H2O + H(+). It catalyses the reaction all-trans-4-hydroxyretinoate + reduced [NADPH--hemoprotein reductase] + O2 = all-trans-4-oxoretinoate + oxidized [NADPH--hemoprotein reductase] + 2 H2O + H(+). It carries out the reaction 9-cis-retinoate + reduced [NADPH--hemoprotein reductase] + O2 = 9-cis-4-hydroxyretinoate + oxidized [NADPH--hemoprotein reductase] + H2O + H(+). The enzyme catalyses 9-cis-4-hydroxyretinoate + reduced [NADPH--hemoprotein reductase] + O2 = 9-cis-4-oxoretinoate + oxidized [NADPH--hemoprotein reductase] + 2 H2O + H(+). The catalysed reaction is all-trans-4-hydroxy-13,14-dihydroretinoate + reduced [NADPH--hemoprotein reductase] + O2 = all-trans-4-oxo-13,14-dihydroretinoate + oxidized [NADPH--hemoprotein reductase] + 2 H2O + H(+). It catalyses the reaction all-trans-13,14-dihydroretinoate + reduced [NADPH--hemoprotein reductase] + O2 = all-trans-4-hydroxy-13,14-dihydroretinoate + oxidized [NADPH--hemoprotein reductase] + H2O + H(+). A cytochrome P450 monooxygenase involved in the metabolism of retinoates (RAs), the active metabolites of vitamin A, and critical signaling molecules in animals. RAs exist as at least four different isomers: all-trans-RA (atRA), 9-cis-RA, 13-cis-RA, and 9,13-dicis-RA, where atRA is considered to be the biologically active isomer, although 9-cis-RA and 13-cis-RA also have activity. Catalyzes the oxidation of atRA primarily at C-4. Oxidation of atRA limits its biological activity and initiates a degradative process leading to its eventual elimination, thereby contributes to the regulation of atRA homeostasis and signaling. Able to metabolize other RAs such as 9-cis with high efficiency. Can oxidize all-trans-13,14-dihydroretinoate (DRA) to metabolites which could include all-trans-4-oxo-DRA, all-trans-4-hydroxy-DRA, all-trans-5,8-epoxy-DRA, and all-trans-18-hydroxy-DRA. Shares sequence similarity with other CYP26 family members, but has higher affinity to 9-cis-RA and is much less sensitive to the inhibitory effects of ketoconazole. In cooperation with Cyp26a1, contributes to the CNS patterning and the development of regions of higher visual acuity. The protein is Cytochrome P450 26C1 (CYP26C1) of Homo sapiens (Human).